Here is a 249-residue protein sequence, read N- to C-terminus: Metal-staphylopine import system ATP-binding protein CntF (249 aa).

The region spanning Ile2–Glu244 is the ABC transporter domain. Residue Gly42–Ser49 participates in ATP binding.

The protein belongs to the ABC transporter superfamily. The complex is composed of two ATP-binding proteins (CntD and CntF), two transmembrane proteins (CntB and CntC) and a solute-binding protein (CntA).

The protein localises to the cell membrane. Its activity is regulated as follows. Nickel/cobalt import is reduced in the presence of zinc. In terms of biological role, part of the ABC transporter complex CntABCDF (Opp1) involved in the uptake of metal in complex with the metallophore staphylopine (StP). Involved in the import of divalent metals ions such as nickel, cobalt and zinc. Probably responsible for energy coupling to the transport system. Plays a major role in nickel/cobalt import in zinc-depleted conditions. Contributes to virulence. Required for full urease activity in vitro. This chain is Metal-staphylopine import system ATP-binding protein CntF, found in Staphylococcus aureus (strain NCTC 8325 / PS 47).